We begin with the raw amino-acid sequence, 35 residues long: Photosystem II reaction center protein M (35 aa).

The chain crosses the membrane as a helical span at residues 7–27 (GFIASILFVLVPTVFLLILFI).

Belongs to the PsbM family. As to quaternary structure, PSII is composed of 1 copy each of membrane proteins PsbA, PsbB, PsbC, PsbD, PsbE, PsbF, PsbH, PsbI, PsbJ, PsbK, PsbL, PsbM, PsbT, PsbX, PsbY, PsbZ, Psb30/Ycf12, peripheral proteins PsbO, CyanoQ (PsbQ), PsbU, PsbV and a large number of cofactors. It forms dimeric complexes.

The protein localises to the cellular thylakoid membrane. Its function is as follows. One of the components of the core complex of photosystem II (PSII). PSII is a light-driven water:plastoquinone oxidoreductase that uses light energy to abstract electrons from H(2)O, generating O(2) and a proton gradient subsequently used for ATP formation. It consists of a core antenna complex that captures photons, and an electron transfer chain that converts photonic excitation into a charge separation. This subunit is found at the monomer-monomer interface. This chain is Photosystem II reaction center protein M, found in Microcystis aeruginosa (strain NIES-843 / IAM M-2473).